The chain runs to 450 residues: Keratin, type I cytoskeletal 25 (450 aa).

A disordered region spans residues 1–24 (MSLRLPSGSRRAGPRPTTGSLRLS). Residues 1–78 (MSLRLPSGSR…MNEGGLLSGN (78 aa)) are head. The segment at 79–114 (EKVTMQNLNDRLASYLENVRALEEANADLEQKIKGW) is coil 1A. One can recognise an IF rod domain in the interval 79 to 394 (EKVTMQNLND…LLIGGDDGAC (316 aa)). Residues 115–136 (YEKFGPGSCRGLDHDYSRYLPI) are linker 1. Residues 137–228 (IEDLKNQIIA…KNHKEEMQVL (92 aa)) are coil 1B. Residues 229 to 251 (QCAAGGNVNVEMNAAPGVDLTVL) form a linker 12 region. Residues 252–390 (LNNMRAEYEA…ETYCLLIGGD (139 aa)) are coil 2. The segment at 391–450 (DGACKSGGYKSKDYAAGNMGNQMKDPIRAIVVKKVLEEVDQRSKVLTTRLHSLEEKSQSN) is tail. A Phosphoserine modification is found at serine 442.

This sequence belongs to the intermediate filament family. As to quaternary structure, heterodimer of a type I and a type II keratin. Heterodimer with type II keratin KRT5 leading to the formation of keratin intermediate filament (KIF) network. Interacts with KRT6A to form filaments. As to expression, expressed in skin and wool follicle. Expression localized to the inner root sheath of wool follicle.

It is found in the cytoplasm. Functionally, essential for the proper assembly of type I and type II keratin protein complexes and formation of keratin intermediate filaments in the inner root sheath (irs). Plays a role in the cytoskeleton organization. This chain is Keratin, type I cytoskeletal 25, found in Ovis aries (Sheep).